The sequence spans 753 residues: Pesticidal crystal protein Cry20Aa (753 aa).

Over residues 680–696 (DTTYQPSYDNYNQNASG) the composition is skewed to polar residues. The interval 680 to 721 (DTTYQPSYDNYNQNASGTYDDGYNPNASDSYDQSYTNNYSQN) is disordered. Residues 712 to 721 (QSYTNNYSQN) are compositionally biased toward low complexity.

Belongs to the delta endotoxin family. Post-translationally, has low mosquitocidal activity probably due to rapid proteolysis to inactive 56 kDa and 43 kDa proteins.

Functionally, promotes colloidosmotic lysis by binding to the midgut epithelial cells of mosquitos. Active against Aedes aegypti and Culex quinquefasciatus larvae. The sequence is that of Pesticidal crystal protein Cry20Aa (cry20Aa) from Bacillus thuringiensis subsp. fukuokaensis.